A 109-amino-acid polypeptide reads, in one-letter code: U4-lycotoxin-Ls1a (109 aa).

Positions 1-22 (MKVLVLFSVLFLTLFSYSSTEA) are cleaved as a signal peptide. Residues 23–44 (IDELDSDAEEDMLSLMANEQVR) constitute a propeptide that is removed on maturation. The tract at residues 45–88 (AKACTPRLHDCSHDRHSCCRGELFKDVCYCFYPEGEDKTEVCSC) is knottin domain. Intrachain disulfides connect cysteine 48/cysteine 63, cysteine 55/cysteine 72, cysteine 62/cysteine 88, and cysteine 74/cysteine 86. The tract at residues 89-108 (QQPKSHKYIEKVVDKAKTVV) is linear cationic cytotoxin domain.

This sequence belongs to the neurotoxin 19 (CSTX) family. 05 (U4-Lctx) subfamily. Expressed by the venom gland.

The protein localises to the secreted. In terms of biological role, enhances the high-affinity desensitization of human P2RX3 purinoceptors. This is U4-lycotoxin-Ls1a from Lycosa singoriensis (Wolf spider).